A 515-amino-acid polypeptide reads, in one-letter code: Probable cytosol aminopeptidase (515 aa).

Positions 279 and 284 each coordinate Mn(2+). Lys291 is a catalytic residue. Mn(2+) is bound by residues Asp302, Asp361, and Glu363. The active site involves Arg365.

Belongs to the peptidase M17 family. Mn(2+) serves as cofactor.

It localises to the cytoplasm. The catalysed reaction is Release of an N-terminal amino acid, Xaa-|-Yaa-, in which Xaa is preferably Leu, but may be other amino acids including Pro although not Arg or Lys, and Yaa may be Pro. Amino acid amides and methyl esters are also readily hydrolyzed, but rates on arylamides are exceedingly low.. The enzyme catalyses Release of an N-terminal amino acid, preferentially leucine, but not glutamic or aspartic acids.. Functionally, presumably involved in the processing and regular turnover of intracellular proteins. Catalyzes the removal of unsubstituted N-terminal amino acids from various peptides. This is Probable cytosol aminopeptidase from Mycobacterium tuberculosis (strain ATCC 25177 / H37Ra).